Here is a 154-residue protein sequence, read N- to C-terminus: Probable chemoreceptor glutamine deamidase CheD (154 aa).

Belongs to the CheD family.

It catalyses the reaction L-glutaminyl-[protein] + H2O = L-glutamyl-[protein] + NH4(+). In terms of biological role, probably deamidates glutamine residues to glutamate on methyl-accepting chemotaxis receptors (MCPs), playing an important role in chemotaxis. In Methanococcus maripaludis (strain C6 / ATCC BAA-1332), this protein is Probable chemoreceptor glutamine deamidase CheD.